Consider the following 220-residue polypeptide: Outer membrane protein assembly factor BamD (220 aa).

Positions 1 to 22 (MRLKHFKTFLFITMAIIVIGTG) are cleaved as a signal peptide. Cysteine 23 carries the N-palmitoyl cysteine lipid modification. Cysteine 23 carries the S-diacylglycerol cysteine lipid modification.

The protein belongs to the BamD family. Part of the Bam complex.

The protein localises to the cell outer membrane. Its function is as follows. Part of the outer membrane protein assembly complex, which is involved in assembly and insertion of beta-barrel proteins into the outer membrane. The protein is Outer membrane protein assembly factor BamD of Helicobacter pylori (strain ATCC 700392 / 26695) (Campylobacter pylori).